A 213-amino-acid chain; its full sequence is Glycerol-3-phosphate acyltransferase (213 aa).

The next 6 helical transmembrane spans lie at 3–23 (ILLL…LWIG), 54–76 (TITF…WLGI), 83–100 (IIGF…FTGF), 110–130 (AGVL…VFAL), 142–162 (SITA…IHFL), and 163–183 (LDGY…VIIF).

It belongs to the PlsY family. As to quaternary structure, probably interacts with PlsX.

The protein localises to the cell membrane. It carries out the reaction an acyl phosphate + sn-glycerol 3-phosphate = a 1-acyl-sn-glycero-3-phosphate + phosphate. Its pathway is lipid metabolism; phospholipid metabolism. Its function is as follows. Catalyzes the transfer of an acyl group from acyl-phosphate (acyl-PO(4)) to glycerol-3-phosphate (G3P) to form lysophosphatidic acid (LPA). This enzyme utilizes acyl-phosphate as fatty acyl donor, but not acyl-CoA or acyl-ACP. This Streptococcus thermophilus (strain ATCC BAA-491 / LMD-9) protein is Glycerol-3-phosphate acyltransferase.